The following is a 20-amino-acid chain: Astacin-like peptidase p18 (20 aa).

The Peptidase M12A domain occupies 1 to 20 (NAIPGNYYRWPYAKVPYVID).

The cofactor is Zn(2+).

Active against casein. Has a role as a digestive enzyme. The chain is Astacin-like peptidase p18 from Argiope aurantia (Black-and-yellow garden spider).